The primary structure comprises 175 residues: Hypoxanthine-guanine phosphoribosyltransferase (175 aa).

Diphosphate-binding residues include K40 and G41. 2 residues coordinate Mg(2+): E96 and D97. D100 acts as the Proton acceptor in catalysis. Residues K128, 149-150, and D156 contribute to the GMP site; that span reads FL. R162 lines the diphosphate pocket.

The protein belongs to the purine/pyrimidine phosphoribosyltransferase family. Requires Mg(2+) as cofactor.

It localises to the cytoplasm. The catalysed reaction is IMP + diphosphate = hypoxanthine + 5-phospho-alpha-D-ribose 1-diphosphate. It carries out the reaction GMP + diphosphate = guanine + 5-phospho-alpha-D-ribose 1-diphosphate. Its pathway is purine metabolism; IMP biosynthesis via salvage pathway; IMP from hypoxanthine: step 1/1. The protein operates within purine metabolism; GMP biosynthesis via salvage pathway; GMP from guanine: step 1/1. Purine salvage pathway enzyme that catalyzes the transfer of the ribosyl-5-phosphate group from 5-phospho-alpha-D-ribose 1-diphosphate (PRPP) to the N9 position of the 6-oxopurines hypoxanthine and guanine to form the corresponding ribonucleotides IMP (inosine 5'-monophosphate) and GMP (guanosine 5'-monophosphate), with the release of PPi. The chain is Hypoxanthine-guanine phosphoribosyltransferase (hpt) from Mycoplasma pneumoniae (strain ATCC 29342 / M129 / Subtype 1) (Mycoplasmoides pneumoniae).